A 76-amino-acid chain; its full sequence is Conotoxin VnMKLT2-013 (76 aa).

A signal peptide spans 1-23; that stretch reads MMKLTCVLIIAVLFLTACQLTTA. The propeptide occupies 24 to 42; that stretch reads ETRDEYRAVRSSDEVQNSR. Residues 29–49 are disordered; the sequence is YRAVRSSDEVQNSRSTDDCST. 3 cysteine pairs are disulfide-bonded: C47–C58, C52–C63, and C57–C72.

This sequence belongs to the conotoxin O1 superfamily. In terms of tissue distribution, expressed by the venom duct.

The protein localises to the secreted. This chain is Conotoxin VnMKLT2-013, found in Conus ventricosus (Mediterranean cone).